Reading from the N-terminus, the 364-residue chain is Probable tartrate dehydrogenase/decarboxylase TtuC (364 aa).

The Mn(2+) site is built by Asp-222, Asp-246, and Asp-250.

The protein belongs to the isocitrate and isopropylmalate dehydrogenases family. Requires Mg(2+) as cofactor. The cofactor is Mn(2+). K(+) serves as cofactor.

It localises to the cytoplasm. It catalyses the reaction tartrate + NAD(+) = 2-hydroxy-3-oxosuccinate + NADH + H(+). It carries out the reaction (2R,3S)-tartrate + NAD(+) = 2-hydroxy-3-oxosuccinate + NADH + H(+). The catalysed reaction is (2R,3R)-tartrate + NAD(+) = 2-hydroxy-3-oxosuccinate + NADH + H(+). The enzyme catalyses (2R,3R)-tartrate + H(+) = (R)-glycerate + CO2. It catalyses the reaction (R)-malate + NAD(+) = pyruvate + CO2 + NADH. The protein operates within carbohydrate acid metabolism; tartrate degradation; 2-hydroxy-3-oxosuccinate from L-tartrate: step 1/1. It functions in the pathway carbohydrate acid metabolism; tartrate degradation; 2-hydroxy-3-oxosuccinate from meso-tartrate: step 1/1. Its pathway is carbohydrate acid metabolism; tartrate degradation; D-glycerate from L-tartrate: step 1/1. Functionally, has multiple catalytic activities. Apart from catalyzing the oxidation of (+)-tartrate to oxaloglycolate, also converts meso-tartrate to D-glycerate and catalyzes the oxidative decarboxylation of D-malate to pyruvate. This chain is Probable tartrate dehydrogenase/decarboxylase TtuC (ttuC), found in Agrobacterium vitis (Rhizobium vitis).